The chain runs to 1491 residues: Membrane-associated guanylate kinase, WW and PDZ domain-containing protein 1 (1491 aa).

Residues 17-105 (ECTVKRGPQG…AVTFKAVRQG (89 aa)) form the PDZ 1 domain. In terms of domain architecture, Guanylate kinase-like spans 96–287 (AVTFKAVRQG…APITDPSQKF (192 aa)). 103–110 (RQGGRLNK) contributes to the ATP binding site. Residues 236 to 267 (AENEEEDDVPEMNSSFTADSGEQEEHTLQETA) form a disordered region. Positions 300-333 (GPLPENWEMAYTENGEVYFIDHNTKTTSWLDPRC) constitute a WW 1 domain. Residue S357 is modified to Phosphoserine. The WW 2 domain maps to 359–392 (LELPAGWEKIEDPVYGIYYVDHINRKTQYENPVL). Low complexity predominate over residues 411 to 421 (QQQQQQQQQQQ). The segment at 411–462 (QQQQQQQQQQQTEEWTEDHSALVPPVIPNHPPSNPEPAREVPLQGKPFFTRN) is disordered. Residues 435-445 (PVIPNHPPSNP) are compositionally biased toward pro residues. The region spanning 472–554 (HTKLRKSSRG…GASVDLELCR (83 aa)) is the PDZ 2 domain. The span at 586–600 (QETYDSPASHSSKTG) shows a compositional bias: polar residues. 3 disordered regions span residues 586–623 (QETYDSPASHSSKTGKVNGMKDARPSSPADVASNSSHG), 720–832 (QRGG…FGEC), and 932–987 (TENE…GGGS). The region spanning 643–721 (TVHIVKGPMG…GSEVTLLVQR (79 aa)) is the PDZ 3 domain. 2 positions are modified to phosphoserine: S730 and S741. Over residues 742-752 (QNSSQHSVSSH) the composition is skewed to low complexity. Positions 756–766 (HTASPSHSTQV) are enriched in polar residues. The residue at position 800 (S800) is a Phosphoserine. The region spanning 813-895 (SGLSKGERER…DELICVDGTP (83 aa)) is the PDZ 4 domain. Positions 939 to 951 (PASSHHSSNQPAS) are enriched in polar residues. Residues 970 to 1066 (SSGSGSTSGI…DRILAVNGCS (97 aa)) form the PDZ 5 domain. Residues 970 to 1066 (SSGSGSTSGI…DRILAVNGCS (97 aa)) form an interaction with FCHSD2 region. Residues 975-987 (STSGIGSGGGGGS) show a composition bias toward gly residues. The residue at position 1071 (S1071) is a Phosphoserine. Residues 1112-1130 (TTTHTPSQQGTQETRNTTK) are compositionally biased toward polar residues. 2 disordered regions span residues 1112-1143 (TTTHTPSQQGTQETRNTTKPKQESQFEFKAPQ) and 1234-1491 (DGSV…DLSI). A PDZ 6 domain is found at 1124–1206 (ETRNTTKPKQ…DEILEINGET (83 aa)). Basic and acidic residues-rich tracts occupy residues 1278–1338 (DLHK…DAQA), 1354–1396 (KRRE…DGSP), and 1403–1491 (LERL…DLSI). Phosphoserine occurs at positions 1361 and 1412.

In terms of assembly, part of a complex composed of AMOTL2, MAGI1 and CDH5, within the complex AMOTL2 acts as a scaffold protein for the interaction of MAGI1 with CDH5. The complex is required for coupling actin fibers to cell junctions in endothelial cells. Interacts through its WW 2 domain with SYNPO and through its PDZ 5 domain with ACTN4. Interacts with cytoplasmic domain of ADGRB1. Interacts via its WW domains with DRPLA. Interacts with ESAM, LRP2 and CXADR. May interact with CTNNB1. Interacts through its PDZ 1 domain with NET1. Interacts with ASIC3 and AMOT. Interacts with FCHSD2. Interacts with IGSF5/JAM4 and through its PDZ 2 and 3 domains with NPHS1 forming a tripartite complex. Interacts with DDN. Interacts with DLL1. Interacts with KCNJ10 and possibly with KCNJ10/KCNJ16 heterodimer; this interaction may facilitate KCNJ10/KCNJ16 potassium channel expression at the basolateral membrane in kidney tubular cells. Interacts with PRRG4 (via cytoplasmic domain). Interacts (via PDZ domain) with RAPGEF2. In terms of tissue distribution, widely expressed with the exception of skeletal muscle. Isoform 1, isoform 2 and isoform 6 are highly expressed in colon, kidney, lung, liver, and pancreas. Isoform 5 is predominantly expressed in brain and heart. Isoform 3 and isoform 4 are highly expressed in pancreas and brain.

It is found in the cell junction. The protein localises to the tight junction. Its subcellular location is the cell membrane. In terms of biological role, plays a role in coupling actin fibers to cell junctions in endothelial cells, via its interaction with AMOTL2 and CDH5. May regulate acid-induced ASIC3 currents by modulating its expression at the cell surface. In Homo sapiens (Human), this protein is Membrane-associated guanylate kinase, WW and PDZ domain-containing protein 1 (MAGI1).